The primary structure comprises 98 residues: NADH-ubiquinone oxidoreductase chain 4L (98 aa).

3 helical membrane-spanning segments follow: residues Met1–Met21, Ser29–Leu49, and Ile61–Val81.

The protein belongs to the complex I subunit 4L family. Core subunit of respiratory chain NADH dehydrogenase (Complex I) which is composed of 45 different subunits.

It is found in the mitochondrion inner membrane. It catalyses the reaction a ubiquinone + NADH + 5 H(+)(in) = a ubiquinol + NAD(+) + 4 H(+)(out). In terms of biological role, core subunit of the mitochondrial membrane respiratory chain NADH dehydrogenase (Complex I) which catalyzes electron transfer from NADH through the respiratory chain, using ubiquinone as an electron acceptor. Part of the enzyme membrane arm which is embedded in the lipid bilayer and involved in proton translocation. The protein is NADH-ubiquinone oxidoreductase chain 4L (MT-ND4L) of Mirounga angustirostris (Northern elephant seal).